A 414-amino-acid chain; its full sequence is Serine hydroxymethyltransferase (414 aa).

(6S)-5,6,7,8-tetrahydrofolate-binding positions include L117 and 121–123 (GHL). K226 is subject to N6-(pyridoxal phosphate)lysine. 349–351 (SPF) is a binding site for (6S)-5,6,7,8-tetrahydrofolate.

The protein belongs to the SHMT family. As to quaternary structure, homodimer. The cofactor is pyridoxal 5'-phosphate.

The protein localises to the cytoplasm. The enzyme catalyses (6R)-5,10-methylene-5,6,7,8-tetrahydrofolate + glycine + H2O = (6S)-5,6,7,8-tetrahydrofolate + L-serine. It functions in the pathway one-carbon metabolism; tetrahydrofolate interconversion. Its pathway is amino-acid biosynthesis; glycine biosynthesis; glycine from L-serine: step 1/1. Functionally, catalyzes the reversible interconversion of serine and glycine with tetrahydrofolate (THF) serving as the one-carbon carrier. This reaction serves as the major source of one-carbon groups required for the biosynthesis of purines, thymidylate, methionine, and other important biomolecules. Also exhibits THF-independent aldolase activity toward beta-hydroxyamino acids, producing glycine and aldehydes, via a retro-aldol mechanism. The chain is Serine hydroxymethyltransferase from Desulfovibrio desulfuricans (strain ATCC 27774 / DSM 6949 / MB).